Here is a 286-residue protein sequence, read N- to C-terminus: Ferric acinetobactin reductase (286 aa).

In terms of domain architecture, FAD-binding FR-type spans 25-131 (MEQLEMTIVS…IGPRPHFIPN (107 aa)). Arginine 79, valine 80, threonine 82, aspartate 96, valine 98, histidine 100, aspartate 102, serine 104, alanine 106, arginine 250, glycine 252, and serine 255 together coordinate FAD.

The protein belongs to the SIP oxidoreductase family. Monomer in solution. Requires FAD as cofactor.

It carries out the reaction 2 a Fe(II)-siderophore + NAD(+) + H(+) = 2 a Fe(III)-siderophore + NADH. It catalyses the reaction 2 a Fe(II)-siderophore + NADP(+) + H(+) = 2 a Fe(III)-siderophore + NADPH. Functionally, ferric-siderophore reductase involved in iron removal from the siderophores after their transport into the cell. Interacts with the siderophores acinetobactin (Acb) and preacinetobactin (pre-Acb) and catalyzes the reduction of the ferric iron bound to the siderophores to ferrous iron, resulting in destabilization of the siderophore chelation complex and entrance of ferrous iron into the intracellular pool of bioavailable metals. Can use NADH and NADPH as electron donors in vitro, but the reduction rate is very slow, suggesting that NADH and NADPH are not the physiological partners of BauF. This is Ferric acinetobactin reductase from Acinetobacter baumannii.